We begin with the raw amino-acid sequence, 348 residues long: Mannonate dehydratase (348 aa).

The protein belongs to the mannonate dehydratase family. Fe(2+) is required as a cofactor. It depends on Mn(2+) as a cofactor.

It carries out the reaction D-mannonate = 2-dehydro-3-deoxy-D-gluconate + H2O. The protein operates within carbohydrate metabolism; pentose and glucuronate interconversion. Catalyzes the dehydration of D-mannonate. This is Mannonate dehydratase from Streptococcus agalactiae serotype V (strain ATCC BAA-611 / 2603 V/R).